Reading from the N-terminus, the 873-residue chain is Leucine--tRNA ligase (873 aa).

Residues P42–H52 carry the 'HIGH' region motif. A disordered region spans residues P624 to P643. The short motif at K632–S636 is the 'KMSKS' region element. Position 635 (K635) interacts with ATP.

It belongs to the class-I aminoacyl-tRNA synthetase family.

The protein resides in the cytoplasm. The enzyme catalyses tRNA(Leu) + L-leucine + ATP = L-leucyl-tRNA(Leu) + AMP + diphosphate. The sequence is that of Leucine--tRNA ligase from Pseudomonas paraeruginosa (strain DSM 24068 / PA7) (Pseudomonas aeruginosa (strain PA7)).